The following is a 764-amino-acid chain: MIKPILGTKKIRRVICIIIGLFCILLLIGIFKHNSTNSVNNEASNFTVDFEEPSYTFPKTVLFENNNNLDDLLLAKKNNWKFQSNVYNQLFMDHSIESVLSLSFNQRCELLIRNIISQKVSWIFDPLETFEINYESEDYIQFIQQEGIKLNKKFEKIKNNLKFKTSLNNFIKDEYKIIRSKQYEQKIIDQLTILRIFNKCFIKNGSKDQNDLVDRIIQEQQKLVTKANSAANGQSELELELKLKLKLTENEKMVSELVEDYVTLGKRVYPWISQRFPFYERWNGDSYYYPPNYEEIFKDKNEPLKSERSTVRDSTSSPSIFLNQFKDASNGKGIVLSITEKHIDDTINLIRLLRALNNKLPIQIIYFNDISQSSKTKIIKAAREEINNFPKSYEKVYHGKQPSVPPSPPPPQEVWFVNIYESINPQHRNLFAKFDFKLLASLFNSFNEFMLIDADTILMKSPEFFFNHQSYQQTGAFFFKDRSPLLKRPITDGEFLIKMGPSSIDSIMFDIPMMTQYTTHRELFKGLRLYMESGLVMIDKQRRRHFNSILMMNQLKFIHPISNSMWGDKELFWLGFAINGDENYKFNNHFAAAIGQLTSNQYNKDRRTPLKSKEICSSHPGHISDEDDRSLLWFNSGFRFCHEANNIDYQEETKNNVILKFLNGRHPLEFKKYYSDPLRITHAIVPPLNKNFQKMYNYDEEPTDGWTSEPNCNKYMWCAYSSIGGRTGPEETSHKETLDGLLVEYTPEEIAYFNYLGDVWVGKY.

Residues 1–13 (MIKPILGTKKIRR) lie on the Cytoplasmic side of the membrane. The chain crosses the membrane as a helical span at residues 14 to 34 (VICIIIGLFCILLLIGIFKHN). The Lumenal segment spans residues 35-764 (STNSVNNEAS…YLGDVWVGKY (730 aa)). N-linked (GlcNAc...) asparagine glycosylation is found at asparagine 45 and asparagine 204.

Belongs to the MNN1/MNT family.

It localises to the golgi apparatus membrane. It functions in the pathway protein modification; protein glycosylation. Functionally, responsible for addition of the terminal mannose residues to the outer chain of core N-linked polysaccharides and to O-linked mannotriose. Implicated in late Golgi modifications. This chain is Putative alpha-1,3-mannosyltransferase MNN13 (MNN13), found in Candida albicans (strain SC5314 / ATCC MYA-2876) (Yeast).